The chain runs to 522 residues: Tetratricopeptide repeat protein 39C (522 aa).

TPR repeat units lie at residues 254 to 287 (SLFM…AVDQ), 292 to 325 (HVCL…SRWS), and 424 to 457 (GLKH…ESCR).

This sequence belongs to the TTC39 family.

In Rattus norvegicus (Rat), this protein is Tetratricopeptide repeat protein 39C (Ttc39c).